The primary structure comprises 101 residues: MAKVALIQRELKREKLAAKYAAKYAELKAIASDAKRSDEEREAARLGLQKLPRNANPTRQRNRCEITGRPRGTFRQFGLARAKIRELAFAGDIPGVTKASW.

The tract at residues 32–67 (SDAKRSDEEREAARLGLQKLPRNANPTRQRNRCEIT) is disordered. The segment covering 33-44 (DAKRSDEEREAA) has biased composition (basic and acidic residues).

It belongs to the universal ribosomal protein uS14 family. In terms of assembly, part of the 30S ribosomal subunit. Contacts proteins S3 and S10.

In terms of biological role, binds 16S rRNA, required for the assembly of 30S particles and may also be responsible for determining the conformation of the 16S rRNA at the A site. This Paracidovorax citrulli (strain AAC00-1) (Acidovorax citrulli) protein is Small ribosomal subunit protein uS14.